The chain runs to 256 residues: MSHVSICLLSEAGADPGALSILADRWGLVSDDQAVMALVLTAERLELRKRDEPKLGGIYVDFVSGTQAHRRKFGGGRGEAVAKAVGIKKGYLPRVVDATAGLGRDAFVLAALGCQVQMLERNPVVAALLDDGLRRGYLDAEIGPWLRERLTLLHASSLTALVAIEPCPEVVYLDPMYPHRQKSALVKKEMRVFQSLVGADNDADGLLAPARALATKRVVVKRPDYAEPLAGVAAQAAVVTKSHRFDIYPSSVTPPR.

S-adenosyl-L-methionine-binding positions include 104–105, 120–121, 156–157, and Asp-174; these read RD, ER, and SS.

Belongs to the methyltransferase superfamily. RsmJ family.

The protein localises to the cytoplasm. It catalyses the reaction guanosine(1516) in 16S rRNA + S-adenosyl-L-methionine = N(2)-methylguanosine(1516) in 16S rRNA + S-adenosyl-L-homocysteine + H(+). Its function is as follows. Specifically methylates the guanosine in position 1516 of 16S rRNA. This is Ribosomal RNA small subunit methyltransferase J from Yersinia pseudotuberculosis serotype O:3 (strain YPIII).